Consider the following 704-residue polypeptide: Protein kinase C-like 1 (704 aa).

Phosphothreonine; by autocatalysis occurs at positions 89 and 139. 2 consecutive Phorbol-ester/DAG-type zinc fingers follow at residues 165–215 and 237–287; these read GHQF…IMQC and PHRF…SNLC. Threonine 324 is subject to Phosphothreonine; by autocatalysis. The Protein kinase domain maps to 375-634; that stretch reads FNLLKVLGKG…DGPIRQHCFF (260 aa). Residues 381–389 and lysine 404 each bind ATP; that span reads LGKGSFGKV. The Proton acceptor role is filled by aspartate 499. In terms of domain architecture, AGC-kinase C-terminal spans 635-704; it reads RGVDWKRFEN…FSYTNPHFSK (70 aa).

Belongs to the protein kinase superfamily. AGC Ser/Thr protein kinase family. PKC subfamily.

It catalyses the reaction L-seryl-[protein] + ATP = O-phospho-L-seryl-[protein] + ADP + H(+). The enzyme catalyses L-threonyl-[protein] + ATP = O-phospho-L-threonyl-[protein] + ADP + H(+). Functionally, diacylglycerol (DAG)-dependent serine/threonine-protein kinase that phosphorylates a range of cellular proteins. Phosphorylates mlk-1, a component of the JNK pathway. Involved in axon regeneration after injury probably by activating the JNK pathway. Plays a role in resistance to fungal infection and in wound healing by promoting expression of antimicrobial peptide nlp-29 in the epidermis downstream of gpa-12 and plc-3 and upstream of tir-1-p38-like pathway. Probably by regulating neuronal transmission in ALA neurons, regulates the decrease in pharyngeal pumping during the quiescent state that precedes each larval molt, downstream of lin-3 and receptor let-23 and phospholipase plc-3. The polypeptide is Protein kinase C-like 1 (tpa-1) (Caenorhabditis elegans).